The chain runs to 110 residues: UPF0060 membrane protein Rpal_4363 (110 aa).

4 consecutive transmembrane segments (helical) span residues 4-24 (LLTF…FWAW), 31-51 (PLWL…LTLA), 59-79 (AYAA…WAIE), and 88-108 (VIGA…PRAL).

It belongs to the UPF0060 family.

The protein localises to the cell inner membrane. The chain is UPF0060 membrane protein Rpal_4363 from Rhodopseudomonas palustris (strain TIE-1).